Here is a 242-residue protein sequence, read N- to C-terminus: uncharacterized protein (242 aa).

The region spanning 8–76 (TPLYIQLKQI…QGKGTFVKSP (69 aa)) is the HTH gntR-type domain. The segment at residues 36-55 (ENELCTKYNVSRITVRKAIL) is a DNA-binding region (H-T-H motif).

This is an uncharacterized protein from Bacillus subtilis (strain 168).